The sequence spans 154 residues: Plastocyanin, chloroplastic (154 aa).

A chloroplast-targeting transit peptide spans 1 to 57; it reads MAALSSAAVTIPSMAPSAPGRRRMRSSLVVRASLGKAAGAAAVAVAASAMLAGGAMA. Residues 58–154 enclose the Plastocyanin-like domain; it reads QEVLLGANGG…AGMVGKVTVN (97 aa). Residues histidine 94, cysteine 139, histidine 142, and methionine 147 each contribute to the Cu cation site.

The protein belongs to the plastocyanin family. The cofactor is Cu(2+).

It is found in the plastid. The protein resides in the chloroplast thylakoid membrane. Its function is as follows. Participates in electron transfer between P700 and the cytochrome b6-f complex in photosystem I. The protein is Plastocyanin, chloroplastic (PETE) of Oryza sativa subsp. indica (Rice).